The following is a 60-amino-acid chain: Large ribosomal subunit protein bL32 (60 aa).

Residues 1–19 (MAVPKRKKSKSRRNMHRSH) show a composition bias toward basic residues. The tract at residues 1-24 (MAVPKRKKSKSRRNMHRSHHAIEP) is disordered.

Belongs to the bacterial ribosomal protein bL32 family.

This chain is Large ribosomal subunit protein bL32, found in Wolbachia pipientis wMel.